We begin with the raw amino-acid sequence, 375 residues long: Beta-1,3-N-acetylglucosaminyltransferase lunatic fringe (375 aa).

Residues 1–8 (MLKNWGKK) are Cytoplasmic-facing. Residues 9–29 (LLLSIVGATLTCLLVLVVDQQ) traverse the membrane as a helical; Signal-anchor for type II membrane protein segment. The Lumenal portion of the chain corresponds to 30 to 375 (SRHMLETQSD…TPWCPWKAAY (346 aa)). Residues 53-73 (DLDPANPGDGGDPANSAQDSG) are disordered. Residue R125 participates in substrate binding. The N-linked (GlcNAc...) asparagine glycan is linked to N163. 2 disulfides stabilise this stretch: C164–C175 and C193–C256. D197 contacts substrate. Residue D198 coordinates Mn(2+). D286 is an active-site residue. A Mn(2+)-binding site is contributed by H310. Residues C360 and C369 are joined by a disulfide bond.

This sequence belongs to the glycosyltransferase 31 family. Mn(2+) serves as cofactor. Requires Co(2+) as cofactor. In terms of processing, a soluble form may be derived from the membrane form by proteolytic processing. As to expression, detected in the neural tube, the eye and the otic vesicle, expression coincides with the region that produces the medial, intermediate and lateral neurons.

Its subcellular location is the golgi apparatus membrane. The enzyme catalyses 3-O-(alpha-L-fucosyl)-L-threonyl-[EGF-like domain protein] + UDP-N-acetyl-alpha-D-glucosamine = 3-O-(N-acetyl-beta-D-glucosaminyl-(1-&gt;3)-alpha-L-fucosyl)-L-threonyl-[EGF-like domain protein] + UDP + H(+). It catalyses the reaction 3-O-(alpha-L-fucosyl)-L-seryl-[EGF-like domain protein] + UDP-N-acetyl-alpha-D-glucosamine = 3-O-(N-acetyl-beta-D-glucosaminyl-(1-&gt;3)-alpha-L-fucosyl)-L-seryl-[EGF-like domain protein] + UDP + H(+). Its function is as follows. Glycosyltransferase that initiates the elongation of O-linked fucose residues attached to EGF-like repeats in the extracellular domain of Notch molecules. Essential mediator of somite segmentation and patterning. May be involved in mesoderm development. The chain is Beta-1,3-N-acetylglucosaminyltransferase lunatic fringe (lfng) from Xenopus laevis (African clawed frog).